Here is a 552-residue protein sequence, read N- to C-terminus: MKIRFMMLFGLLTLPVLAWAADALTGDVQRQPLNIQAIVMFLLFVGGTLYITYWASKKTRSRSDYYTAGGNITGFQNGLAIAGDYMSAASFLGISALVYTSGYDGLIYSLGFLVGWPIILFLIAERLRNLGRYTFADVASYRLQQRPIRSLSACGSLVVVALYLIAQMVGAGKLIELLFGLNYHVAVILVGILMVMYVMFGGMLATTWVQIIKAVLLLFGATFMAVMVMKSVGFSFDALFKQAMAVHPKGASIMSPGGLVSDPISALSLGLGLMFGTAGLPHILMRFFTVSDAKEARKSVFYATGFMGYFYFLTFIIGFGAILLVSANPEFKDATGALIGGNNMAAVHLADAVGGDFFLGFISAVAFATILAVVAGLTLAGASAVSHDLYSNVIKKGKATERDELKVSKITVLVLGVVAISLGILFENQNIAFMVGLAFSIAASCNFPIIIISMYWSKLTTRGAMIGGWAGLLTAVILMILGPTIWVKILGHATPIYPYDYPALFSMLVAFIGIWFFSITDRSEAGQQERARFHAQFVRSQTGVGASKGSSH.

The next 14 helical transmembrane spans lie at 5 to 25 (FMMLFGLLTLPVLAWAADALT), 35 to 55 (IQAIVMFLLFVGGTLYITYWA), 78 to 98 (GLAIAGDYMSAASFLGISALV), 105 to 125 (GLIYSLGFLVGWPIILFLIAE), 151 to 171 (LSACGSLVVVALYLIAQMVGA), 185 to 205 (VAVILVGILMVMYVMFGGMLA), 208 to 228 (WVQIIKAVLLLFGATFMAVMV), 264 to 284 (ISALSLGLGLMFGTAGLPHIL), 305 to 325 (GFMGYFYFLTFIIGFGAILLV), 357 to 377 (FFLGFISAVAFATILAVVAGL), 407 to 427 (VSKITVLVLGVVAISLGILFE), 431 to 451 (IAFMVGLAFSIAASCNFPIII), 466 to 486 (IGGWAGLLTAVILMILGPTIW), and 499 to 519 (YDYPALFSMLVAFIGIWFFSI).

This sequence belongs to the sodium:solute symporter (SSF) (TC 2.A.21) family.

The protein resides in the cell inner membrane. Functionally, transports acetate. The protein is Cation/acetate symporter ActP of Pectobacterium carotovorum subsp. carotovorum (strain PC1).